The sequence spans 541 residues: Glucans biosynthesis protein D (541 aa).

The segment at residues 1 to 29 (MHRRNLLKASMAIAAYTGLSASGLLAAQA) is a signal peptide (tat-type signal).

It belongs to the OpgD/OpgG family. In terms of processing, predicted to be exported by the Tat system. The position of the signal peptide cleavage has not been experimentally proven.

The protein localises to the periplasm. It participates in glycan metabolism; osmoregulated periplasmic glucan (OPG) biosynthesis. Probably involved in the control of the structural glucose backbone of osmoregulated periplasmic glucans (OPGs). This chain is Glucans biosynthesis protein D, found in Pseudomonas fluorescens (strain SBW25).